A 137-amino-acid polypeptide reads, in one-letter code: Transcription antitermination protein NusB (137 aa).

Belongs to the NusB family.

Its function is as follows. Involved in transcription antitermination. Required for transcription of ribosomal RNA (rRNA) genes. Binds specifically to the boxA antiterminator sequence of the ribosomal RNA (rrn) operons. The polypeptide is Transcription antitermination protein NusB (Borreliella afzelii (strain PKo) (Borrelia afzelii)).